The primary structure comprises 526 residues: Peptide chain release factor 3 (526 aa).

Positions 9–277 (DKRRTFAIIS…GIVEWAPKPL (269 aa)) constitute a tr-type G domain. Residues 18 to 25 (SHPDAGKT), 86 to 90 (DTPGH), and 140 to 143 (NKLD) contribute to the GTP site.

The protein belongs to the TRAFAC class translation factor GTPase superfamily. Classic translation factor GTPase family. PrfC subfamily.

The protein resides in the cytoplasm. In terms of biological role, increases the formation of ribosomal termination complexes and stimulates activities of RF-1 and RF-2. It binds guanine nucleotides and has strong preference for UGA stop codons. It may interact directly with the ribosome. The stimulation of RF-1 and RF-2 is significantly reduced by GTP and GDP, but not by GMP. This is Peptide chain release factor 3 from Shewanella putrefaciens (strain CN-32 / ATCC BAA-453).